The following is a 224-amino-acid chain: Elongation factor 1-beta 2 (224 aa).

Alanine 2 carries the post-translational modification N-acetylalanine. One can recognise a GST C-terminal domain in the interval 14 to 65; the sequence is VKSVEEHLAGKTYISGDQLSVDDVKVYAAVPVKPSDAFPNASKWYESVASQL. The segment at 89–139 is disordered; it reads EAEAPAAAADDDDDMDLFGDETEEEKKAAEEREAAKKDTKKPKESGKSSVL. The span at 97–111 shows a compositional bias: acidic residues; sequence ADDDDDMDLFGDETE. Positions 112–134 are enriched in basic and acidic residues; that stretch reads EEKKAAEEREAAKKDTKKPKESG.

This sequence belongs to the EF-1-beta/EF-1-delta family. As to quaternary structure, EF-1 is composed of 4 subunits: alpha, beta (1B-alpha=beta'), delta (1B-beta), and gamma (1B-gamma).

Its function is as follows. EF-1-beta and EF-1-delta stimulate the exchange of GDP bound to EF-1-alpha to GTP. The sequence is that of Elongation factor 1-beta 2 from Arabidopsis thaliana (Mouse-ear cress).